Here is a 183-residue protein sequence, read N- to C-terminus: Probable calcium-binding protein CML47 (183 aa).

EF-hand domains lie at 112–147 (MGKE…LGYD) and 149–183 (CTKM…KSFS). Positions 125, 127, 129, 136, 162, 164, 166, 168, and 173 each coordinate Ca(2+).

Functionally, potential calcium sensor. The sequence is that of Probable calcium-binding protein CML47 (CML47) from Arabidopsis thaliana (Mouse-ear cress).